The primary structure comprises 106 residues: Iron-sulfur cluster assembly protein CyaY (106 aa).

The protein belongs to the frataxin family.

Its function is as follows. Involved in iron-sulfur (Fe-S) cluster assembly. May act as a regulator of Fe-S biogenesis. The polypeptide is Iron-sulfur cluster assembly protein CyaY (Salmonella dublin (strain CT_02021853)).